Consider the following 468-residue polypeptide: Adenosylhomocysteinase (468 aa).

The substrate site is built by T57, D132, and E194. 195-197 (TTT) is a binding site for NAD(+). Positions 224 and 228 each coordinate substrate. NAD(+) contacts are provided by residues N229, 258–263 (GFGDVG), E281, N316, 337–339 (IGH), and N382.

The protein belongs to the adenosylhomocysteinase family. The cofactor is NAD(+).

Its subcellular location is the cytoplasm. The enzyme catalyses S-adenosyl-L-homocysteine + H2O = L-homocysteine + adenosine. Its pathway is amino-acid biosynthesis; L-homocysteine biosynthesis; L-homocysteine from S-adenosyl-L-homocysteine: step 1/1. May play a key role in the regulation of the intracellular concentration of adenosylhomocysteine. This chain is Adenosylhomocysteinase, found in Methylobacterium nodulans (strain LMG 21967 / CNCM I-2342 / ORS 2060).